The following is a 206-amino-acid chain: Holliday junction branch migration complex subunit RuvA (206 aa).

Residues 1–63 (MIASLRGTVI…EDAMKLYGFI (63 aa)) form a domain I region. The interval 64-142 (DNESREMFSV…AFAAGVVDEA (79 aa)) is domain II. The interval 143-153 (GEQISLPNANI) is flexible linker. The interval 154–206 (ASEVVVEQVSQALVGLGFSEKQSDDAVSFVLAADPSLDTSGALRAALAKLSGK) is domain III.

This sequence belongs to the RuvA family. Homotetramer. Forms an RuvA(8)-RuvB(12)-Holliday junction (HJ) complex. HJ DNA is sandwiched between 2 RuvA tetramers; dsDNA enters through RuvA and exits via RuvB. An RuvB hexamer assembles on each DNA strand where it exits the tetramer. Each RuvB hexamer is contacted by two RuvA subunits (via domain III) on 2 adjacent RuvB subunits; this complex drives branch migration. In the full resolvosome a probable DNA-RuvA(4)-RuvB(12)-RuvC(2) complex forms which resolves the HJ.

It localises to the cytoplasm. Functionally, the RuvA-RuvB-RuvC complex processes Holliday junction (HJ) DNA during genetic recombination and DNA repair, while the RuvA-RuvB complex plays an important role in the rescue of blocked DNA replication forks via replication fork reversal (RFR). RuvA specifically binds to HJ cruciform DNA, conferring on it an open structure. The RuvB hexamer acts as an ATP-dependent pump, pulling dsDNA into and through the RuvAB complex. HJ branch migration allows RuvC to scan DNA until it finds its consensus sequence, where it cleaves and resolves the cruciform DNA. In Corynebacterium glutamicum (strain R), this protein is Holliday junction branch migration complex subunit RuvA.